A 500-amino-acid polypeptide reads, in one-letter code: Cytochrome P450 monooxygenase hepD (500 aa).

Residues 15 to 35 traverse the membrane as a helical segment; it reads WILLSLSLAFIVVYSLFYLAV. 4 N-linked (GlcNAc...) asparagine glycosylation sites follow: Asn-99, Asn-185, Asn-373, and Asn-409. Cys-445 lines the heme pocket. Asn-482 is a glycosylation site (N-linked (GlcNAc...) asparagine).

Belongs to the cytochrome P450 family. The cofactor is heme.

It is found in the membrane. Its pathway is secondary metabolite biosynthesis. Cytochrome P450 monooxygenase; part of the gene cluster that mediates the biosynthesis of heptelidic acid (HA), a sesquiterpene lactone that acts as an inhibitor of glyceraldehyde-3-phosphatedehydrogenase (GAPDH) and a growth inhibitor of the salt-tolerant lactic acid bacteria in soy sauce brewing. The sequence is that of Cytochrome P450 monooxygenase hepD from Aspergillus oryzae (strain ATCC 42149 / RIB 40) (Yellow koji mold).